The chain runs to 367 residues: Histidinol-phosphate aminotransferase (367 aa).

An N6-(pyridoxal phosphate)lysine modification is found at lysine 222.

The protein belongs to the class-II pyridoxal-phosphate-dependent aminotransferase family. Histidinol-phosphate aminotransferase subfamily. The cofactor is pyridoxal 5'-phosphate.

The catalysed reaction is L-histidinol phosphate + 2-oxoglutarate = 3-(imidazol-4-yl)-2-oxopropyl phosphate + L-glutamate. It participates in amino-acid biosynthesis; L-histidine biosynthesis; L-histidine from 5-phospho-alpha-D-ribose 1-diphosphate: step 7/9. The sequence is that of Histidinol-phosphate aminotransferase from Methanosphaera stadtmanae (strain ATCC 43021 / DSM 3091 / JCM 11832 / MCB-3).